The sequence spans 329 residues: Acetyl-coenzyme A carboxylase carboxyl transferase subunit alpha (329 aa).

The CoA carboxyltransferase C-terminal domain maps to 40 to 294 (QLETLAARRR…KTSILRHLTE (255 aa)).

It belongs to the AccA family. In terms of assembly, acetyl-CoA carboxylase is a heterohexamer composed of biotin carboxyl carrier protein (AccB), biotin carboxylase (AccC) and two subunits each of ACCase subunit alpha (AccA) and ACCase subunit beta (AccD).

It localises to the cytoplasm. It carries out the reaction N(6)-carboxybiotinyl-L-lysyl-[protein] + acetyl-CoA = N(6)-biotinyl-L-lysyl-[protein] + malonyl-CoA. It functions in the pathway lipid metabolism; malonyl-CoA biosynthesis; malonyl-CoA from acetyl-CoA: step 1/1. Functionally, component of the acetyl coenzyme A carboxylase (ACC) complex. First, biotin carboxylase catalyzes the carboxylation of biotin on its carrier protein (BCCP) and then the CO(2) group is transferred by the carboxyltransferase to acetyl-CoA to form malonyl-CoA. This is Acetyl-coenzyme A carboxylase carboxyl transferase subunit alpha from Prochlorococcus marinus (strain SARG / CCMP1375 / SS120).